Here is a 666-residue protein sequence, read N- to C-terminus: Putative cysteine-rich receptor-like protein kinase 31 (666 aa).

The first 23 residues, M1–A23, serve as a signal peptide directing secretion. Gnk2-homologous domains follow at residues Q24–F130 and L136–Y245. Residues Q24–V280 lie on the Extracellular side of the membrane. N-linked (GlcNAc...) asparagine glycans are attached at residues N52, N62, N104, N127, and N151. The chain crosses the membrane as a helical span at residues I281–I301. The Cytoplasmic segment spans residues W302–R666. A Protein kinase domain is found at F339–I616. ATP is bound by residues L345–V353 and K367. Y412 carries the post-translational modification Phosphotyrosine. D464 (proton acceptor) is an active-site residue. Phosphoserine is present on S468. Position 504 is a phosphothreonine (T504). The residue at position 512 (Y512) is a Phosphotyrosine.

It belongs to the protein kinase superfamily. Ser/Thr protein kinase family. CRK subfamily.

The protein localises to the membrane. It catalyses the reaction L-seryl-[protein] + ATP = O-phospho-L-seryl-[protein] + ADP + H(+). It carries out the reaction L-threonyl-[protein] + ATP = O-phospho-L-threonyl-[protein] + ADP + H(+). The sequence is that of Putative cysteine-rich receptor-like protein kinase 31 (CRK31) from Arabidopsis thaliana (Mouse-ear cress).